Here is a 397-residue protein sequence, read N- to C-terminus: Succinate--CoA ligase [ADP-forming] subunit beta (397 aa).

Residues 9 to 254 (KALLRSYGAP…ETEEDPKELA (246 aa)) enclose the ATP-grasp domain. ATP-binding positions include K46, 53-55 (GRG), E109, S112, and E117. Residues N209 and D223 each coordinate Mg(2+). Residues N274 and 331–333 (GIM) each bind substrate.

It belongs to the succinate/malate CoA ligase beta subunit family. As to quaternary structure, heterotetramer of two alpha and two beta subunits. Mg(2+) is required as a cofactor.

The enzyme catalyses succinate + ATP + CoA = succinyl-CoA + ADP + phosphate. It catalyses the reaction GTP + succinate + CoA = succinyl-CoA + GDP + phosphate. Its pathway is carbohydrate metabolism; tricarboxylic acid cycle; succinate from succinyl-CoA (ligase route): step 1/1. Its function is as follows. Succinyl-CoA synthetase functions in the citric acid cycle (TCA), coupling the hydrolysis of succinyl-CoA to the synthesis of either ATP or GTP and thus represents the only step of substrate-level phosphorylation in the TCA. The beta subunit provides nucleotide specificity of the enzyme and binds the substrate succinate, while the binding sites for coenzyme A and phosphate are found in the alpha subunit. The polypeptide is Succinate--CoA ligase [ADP-forming] subunit beta (Cereibacter sphaeroides (strain ATCC 17029 / ATH 2.4.9) (Rhodobacter sphaeroides)).